Here is a 1969-residue protein sequence, read N- to C-terminus: Protein mono-ADP-ribosyltransferase PARP4 (1969 aa).

Residues Met-1–Pro-94 form the BRCT domain. The Nuclear localization signal motif lies at Pro-19–Lys-25. Residues Tyr-92–Val-132 form a disordered region. The region spanning Ser-235–Pro-363 is the PARP alpha-helical domain. The 205-residue stretch at Pro-362 to Glu-566 folds into the PARP catalytic domain. In terms of domain architecture, VIT spans Thr-600 to Thr-728. The 171-residue stretch at Glu-869 to Ile-1039 folds into the VWFA domain. Ser-1229 is modified (phosphoserine). A Nuclear localization signal motif is present at residues Asp-1230–Ser-1242. Composition is skewed to pro residues over residues Pro-1372–Leu-1387, His-1402–Ser-1417, Leu-1425–Pro-1444, Leu-1485–Ser-1513, and Leu-1521–Pro-1540. Positions Pro-1372 to Ile-1608 are disordered. An FH1 domain is found at Ile-1443–Gly-1541. Residues Gly-1541 to His-1556 are compositionally biased toward low complexity. Residues Leu-1557–Ser-1585 are compositionally biased toward pro residues. Residues Phe-1808–Gly-1969 form an interaction with the major vault protein region.

It belongs to the ARTD/PARP family. As to quaternary structure, component of the vault ribonucleoprotein particle, at least composed of MVP, PARP4 and one or more vault RNAs (vRNAs). Interacts with TEP1.

The protein localises to the cytoplasm. Its subcellular location is the nucleus. It carries out the reaction L-aspartyl-[protein] + NAD(+) = 4-O-(ADP-D-ribosyl)-L-aspartyl-[protein] + nicotinamide. The catalysed reaction is L-glutamyl-[protein] + NAD(+) = 5-O-(ADP-D-ribosyl)-L-glutamyl-[protein] + nicotinamide. Mono-ADP-ribosyltransferase that mediates mono-ADP-ribosylation of target proteins. The chain is Protein mono-ADP-ribosyltransferase PARP4 from Mus musculus (Mouse).